Here is a 601-residue protein sequence, read N- to C-terminus: MDLIRNFSIIAHIDHGKSTLADRIIQLCGGLSDREMEAQVLDSMDIERERGITIKAQTAALNYKAKDGKIYNINLIDTPGHVDFSYEVSRSLSACEGALLVVDASQGVEAQTVANCYMALGLGVEVVPVLNKIDLPQADPERAKKEIEDVIGIDASEAVTCSAKTGLGVADVIEEMIARVPPPTGNAEDPLQALIIDSWFDNYVGVVMLVRIVNGTLKPKDKITLMANGSSHLVEHVGVFSPKSVDRPELSAGQVGFVIAGIKELKAAKVGDTVTHSPGQQGRVPASEPLPGFKEVKPQVFAGLYPVESSEYDQLRESLEKLQLNDAALLYEPEVSQALGFGFRCGFLGLLHMEIVQERLERQYGMNLITTAPTVVYQVEQSSGSIISVDNPSKMPEASKINTILEPIVTVNLYMPQEYVGSIITLCVGKRGIQMDMNYLGRQVKLTYELPMAEIVLDFFDKMKSISRGYASMDYEFKEYRPADVVKVDILINGERVDALSVIVHRSNSQSRGREVVAKMRDIIPRQMFDVAIQAAIGSNIVARENVKALRKNVLAKCYGGDISRKRKLLEKQKEGKKRMKQVGNVEIPQEAFLAILQVED.

One can recognise a tr-type G domain in the interval 2–184 (DLIRNFSIIA…EMIARVPPPT (183 aa)). GTP contacts are provided by residues 14–19 (DHGKST) and 131–134 (NKID).

This sequence belongs to the TRAFAC class translation factor GTPase superfamily. Classic translation factor GTPase family. LepA subfamily.

Its subcellular location is the cell inner membrane. The catalysed reaction is GTP + H2O = GDP + phosphate + H(+). Functionally, required for accurate and efficient protein synthesis under certain stress conditions. May act as a fidelity factor of the translation reaction, by catalyzing a one-codon backward translocation of tRNAs on improperly translocated ribosomes. Back-translocation proceeds from a post-translocation (POST) complex to a pre-translocation (PRE) complex, thus giving elongation factor G a second chance to translocate the tRNAs correctly. Binds to ribosomes in a GTP-dependent manner. This chain is Elongation factor 4, found in Polynucleobacter necessarius subsp. necessarius (strain STIR1).